A 443-amino-acid chain; its full sequence is SURP and G-patch domain-containing protein 1-like protein (443 aa).

Disordered stretches follow at residues 45–71 (IISN…KGGK) and 83–141 (LAPP…TVKK). An SURP motif repeat occupies 142-185 (VADKLASFVAKHGRPFEHITRQKNPGDTPFKFLFDENCADYKYY). Disordered regions lie at residues 198–221 (QTKD…AIPL), 241–272 (TPVE…RGAD), and 285–325 (AQEE…HHMG). Residues 248 to 265 (SSRSAQASITRPSDSDSF) show a composition bias toward polar residues. Residues 285–300 (AQEEKMRRPRQSKDEM) are compositionally biased toward basic and acidic residues. Residues 307–316 (QGPSETSSTD) show a composition bias toward polar residues. The 48-residue stretch at 360–407 (ADNVGHKLLSKMGWKEGEGIGSSRKGMADPIMAGDVKTNNLGVGASAP) folds into the G-patch domain.

The protein localises to the nucleus. The chain is SURP and G-patch domain-containing protein 1-like protein from Arabidopsis thaliana (Mouse-ear cress).